The primary structure comprises 502 residues: ATP synthase subunit alpha (502 aa).

Residue 169–176 (GDRQTGKT) coordinates ATP.

It belongs to the ATPase alpha/beta chains family. As to quaternary structure, F-type ATPases have 2 components, CF(1) - the catalytic core - and CF(0) - the membrane proton channel. CF(1) has five subunits: alpha(3), beta(3), gamma(1), delta(1), epsilon(1). CF(0) has three main subunits: a(1), b(2) and c(9-12). The alpha and beta chains form an alternating ring which encloses part of the gamma chain. CF(1) is attached to CF(0) by a central stalk formed by the gamma and epsilon chains, while a peripheral stalk is formed by the delta and b chains.

It localises to the cell inner membrane. It catalyses the reaction ATP + H2O + 4 H(+)(in) = ADP + phosphate + 5 H(+)(out). Functionally, produces ATP from ADP in the presence of a proton gradient across the membrane. The alpha chain is a regulatory subunit. This Citrifermentans bemidjiense (strain ATCC BAA-1014 / DSM 16622 / JCM 12645 / Bem) (Geobacter bemidjiensis) protein is ATP synthase subunit alpha.